Reading from the N-terminus, the 463-residue chain is tRNA-2-methylthio-N(6)-dimethylallyladenosine synthase (463 aa).

The 117-residue stretch at 19–135 (GSYWITTFGC…LESLLNQVDS (117 aa)) folds into the MTTase N-terminal domain. Residues Cys-28, Cys-64, Cys-98, Cys-170, Cys-174, and Cys-177 each contribute to the [4Fe-4S] cluster site. The Radical SAM core domain maps to 156 to 393 (RDSSICGWVN…NSLVENIAKE (238 aa)). Positions 396–463 (QRYKNTSQEI…RPFSLTAKLL (68 aa)) constitute a TRAM domain.

It belongs to the methylthiotransferase family. MiaB subfamily. In terms of assembly, monomer. [4Fe-4S] cluster is required as a cofactor.

It is found in the cytoplasm. It catalyses the reaction N(6)-dimethylallyladenosine(37) in tRNA + (sulfur carrier)-SH + AH2 + 2 S-adenosyl-L-methionine = 2-methylsulfanyl-N(6)-dimethylallyladenosine(37) in tRNA + (sulfur carrier)-H + 5'-deoxyadenosine + L-methionine + A + S-adenosyl-L-homocysteine + 2 H(+). In terms of biological role, catalyzes the methylthiolation of N6-(dimethylallyl)adenosine (i(6)A), leading to the formation of 2-methylthio-N6-(dimethylallyl)adenosine (ms(2)i(6)A) at position 37 in tRNAs that read codons beginning with uridine. This is tRNA-2-methylthio-N(6)-dimethylallyladenosine synthase from Prochlorococcus marinus (strain NATL2A).